The primary structure comprises 310 residues: Protoheme IX farnesyltransferase (310 aa).

8 consecutive transmembrane segments (helical) span residues 31-51, 53-73, 102-122, 124-144, 149-169, 170-190, 242-262, and 289-309; these read VIELLLVTAIPAMLLADRGSV, PLLILNTLIGGMLAAAGANTL, NALIFGLVLSVGSFFWLWGTS, LLSGLLAVATIAFYVFVYTLL, TSQNVVWGGAAGCMPVMIGWS, AVTGTIQWPALVMFAIIFFWT, LATGWLYASVAVLAGTWFLVM, and LAVVFAALAVDSVLALPTLLG.

This sequence belongs to the UbiA prenyltransferase family. Protoheme IX farnesyltransferase subfamily.

It localises to the cell membrane. The enzyme catalyses heme b + (2E,6E)-farnesyl diphosphate + H2O = Fe(II)-heme o + diphosphate. Its pathway is porphyrin-containing compound metabolism; heme O biosynthesis; heme O from protoheme: step 1/1. Its function is as follows. Converts heme B (protoheme IX) to heme O by substitution of the vinyl group on carbon 2 of heme B porphyrin ring with a hydroxyethyl farnesyl side group. The sequence is that of Protoheme IX farnesyltransferase from Mycobacterium sp. (strain JLS).